The chain runs to 141 residues: Transcription antitermination protein NusB (141 aa).

Belongs to the NusB family.

Its function is as follows. Involved in transcription antitermination. Required for transcription of ribosomal RNA (rRNA) genes. Binds specifically to the boxA antiterminator sequence of the ribosomal RNA (rrn) operons. The chain is Transcription antitermination protein NusB from Desulfotalea psychrophila (strain LSv54 / DSM 12343).